The following is a 281-amino-acid chain: 2-dehydro-3-deoxyphosphooctonate aldolase (281 aa).

This sequence belongs to the KdsA family.

It localises to the cytoplasm. The catalysed reaction is D-arabinose 5-phosphate + phosphoenolpyruvate + H2O = 3-deoxy-alpha-D-manno-2-octulosonate-8-phosphate + phosphate. It participates in carbohydrate biosynthesis; 3-deoxy-D-manno-octulosonate biosynthesis; 3-deoxy-D-manno-octulosonate from D-ribulose 5-phosphate: step 2/3. Its pathway is bacterial outer membrane biogenesis; lipopolysaccharide biosynthesis. The sequence is that of 2-dehydro-3-deoxyphosphooctonate aldolase from Psychromonas ingrahamii (strain DSM 17664 / CCUG 51855 / 37).